The chain runs to 424 residues: UPF0229 protein PputGB1_0427 (424 aa).

Residues 81–107 (EFTAGEHIPRPQGGGGGGGGRGKAGNS) are disordered. Gly residues predominate over residues 92–107 (QGGGGGGGGRGKAGNS).

Belongs to the UPF0229 family.

This is UPF0229 protein PputGB1_0427 from Pseudomonas putida (strain GB-1).